A 194-amino-acid polypeptide reads, in one-letter code: dTTP/UTP pyrophosphatase (194 aa).

Catalysis depends on Asp73, which acts as the Proton acceptor.

This sequence belongs to the Maf family. YhdE subfamily. A divalent metal cation serves as cofactor.

The protein resides in the cytoplasm. It catalyses the reaction dTTP + H2O = dTMP + diphosphate + H(+). The enzyme catalyses UTP + H2O = UMP + diphosphate + H(+). Functionally, nucleoside triphosphate pyrophosphatase that hydrolyzes dTTP and UTP. May have a dual role in cell division arrest and in preventing the incorporation of modified nucleotides into cellular nucleic acids. This chain is dTTP/UTP pyrophosphatase, found in Clostridium botulinum (strain Okra / Type B1).